We begin with the raw amino-acid sequence, 136 residues long: Large ribosomal subunit protein bL17 (136 aa).

Belongs to the bacterial ribosomal protein bL17 family. As to quaternary structure, part of the 50S ribosomal subunit. Contacts protein L32.

The sequence is that of Large ribosomal subunit protein bL17 from Methylobacterium radiotolerans (strain ATCC 27329 / DSM 1819 / JCM 2831 / NBRC 15690 / NCIMB 10815 / 0-1).